The sequence spans 662 residues: MHRASANSLLNSVSGSMMWRNQSSGRRPSKRLSDNEATLSTINSILGAEDMLSKNLLSYLPPNNEEIDMIYPSEQIMTFIEMLHGHKNFFKGQTIHNALRDSAVLKKQIAYGVAQALLNSVSIQQIHDEWKRHVRSFPFHNKKLSFQDYFSVWAHAIKQVILGDISNIINFILQSIDNSHYNRYVDWICTVGIVPFMRTTHTAPNLYNLLQQVSSKLIHDIVRHKQNIVTPVLLGLSSVIIPDFHNIKIFRDRNSEQISCFKNKKAIAFFTYSTPYVIRNRLMLTTPLAHLSPELKKHNSLRRHQKMCQLLNTFPIKVLTTAKTDVTNKKIMDMIEKEEKSSDAKKSLIKFLLNLSDSKSKIGIRDSVEGFIQEITPSIIDQNKLMLNRGQFRKRSAIDTGERDVRDLFKKQIIKCMEEQIQTQMDEIETLKTTNQMFERKIKDLHSLLETNNDCDRYNPNLDHDLENLSLSRALNIVQRLPFTSVSIDDTRSVANSFFSQYIPDTQYADKRIDQLWEMEYMRTFRLRKNVNNQGQEESITYSNYSIELLIVPFLRRFLNIYNLESIPEEFLFLSLGEILLAIYESSKIKHYLRLVYVRELNQISEVFNLTQTHPENSEPIFDSNIFSPNPENEILEKIKRIRNLRRIQHLTRPNYPKGDQD.

It belongs to the herpesviridae portal protein family. Homododecamerizes. Interacts with terminase subunits TRM1 and TRM3.

The protein localises to the virion. Its subcellular location is the host nucleus. Forms a portal in the viral capsid through which viral DNA is translocated during DNA packaging. Assembles as a dodecamer at a single fivefold axe of the T=16 icosahedric capsid. Binds to the molecular motor that translocates the viral DNA, termed terminase. This is Portal protein (U76) from Human herpesvirus 6A (strain Uganda-1102) (HHV-6 variant A).